The chain runs to 650 residues: Acetyl-coenzyme A synthetase (650 aa).

CoA-binding positions include 191–194 (RGGR), T311, and N335. ATP-binding positions include 387 to 389 (GEP), 411 to 416 (DTWWQT), D500, and R515. Residue S523 participates in CoA binding. An ATP-binding site is contributed by R526. Mg(2+) is bound by residues V537, H539, and V542. R584 is a binding site for CoA. K609 carries the post-translational modification N6-acetyllysine.

This sequence belongs to the ATP-dependent AMP-binding enzyme family. The cofactor is Mg(2+). Acetylated. Deacetylation by the SIR2-homolog deacetylase activates the enzyme.

It catalyses the reaction acetate + ATP + CoA = acetyl-CoA + AMP + diphosphate. Its function is as follows. Catalyzes the conversion of acetate into acetyl-CoA (AcCoA), an essential intermediate at the junction of anabolic and catabolic pathways. AcsA undergoes a two-step reaction. In the first half reaction, AcsA combines acetate with ATP to form acetyl-adenylate (AcAMP) intermediate. In the second half reaction, it can then transfer the acetyl group from AcAMP to the sulfhydryl group of CoA, forming the product AcCoA. The polypeptide is Acetyl-coenzyme A synthetase (Shewanella sp. (strain MR-7)).